The sequence spans 263 residues: Glutamate 5-kinase (263 aa).

K14 serves as a coordination point for ATP. Substrate-binding residues include S52, D137, and N149. ATP-binding positions include 169–170 and 211–217; these read SD and TGGIVTK.

Belongs to the glutamate 5-kinase family. As to quaternary structure, homotetramer; oligomerization is not affected by L-proline feedback inhibition. Mg(2+) is required as a cofactor.

It catalyses the reaction L-glutamate + ATP = L-glutamyl 5-phosphate + ADP. Its pathway is amino-acid biosynthesis; L-proline biosynthesis; L-glutamate 5-semialdehyde from L-glutamate: step 1/2. Inhibited by L-proline as part of a negative feedback loop. Also inhibited by L-proline analogs 3,4-dehydro-L-proline, L-azetidine-2-carboxylic acid and L-4-thiazolidine carboxylic acid. Its function is as follows. Catalyzes the transfer of a phosphate group to glutamate to form L-glutamate 5-phosphate. May be important for growth and survival. This chain is Glutamate 5-kinase, found in Leishmania donovani.